The chain runs to 577 residues: 5'-nucleotidase (577 aa).

The first 30 residues, M1–F30, serve as a signal peptide directing secretion. Residues D39, H41, D86, and N118 each coordinate Zn(2+). N135 carries an N-linked (GlcNAc...) asparagine glycan. Positions 221 and 244 each coordinate Zn(2+). N246 provides a ligand contact to substrate. N311 and N347 each carry an N-linked (GlcNAc...) asparagine glycan. 2 disulfides stabilise this stretch: C353/C358 and C365/C387. R354 contributes to the substrate binding site. Substrate is bound by residues Q390 and R395. N-linked (GlcNAc...) asparagine glycosylation occurs at N403. Position 417 (F417) interacts with substrate. C476 and C479 are disulfide-bonded. Y500 to D506 contacts substrate. S552 carries GPI-anchor amidated serine lipidation. Positions A553–S577 are cleaved as a propeptide — removed in mature form.

This sequence belongs to the 5'-nucleotidase family. Homodimer. Zn(2+) is required as a cofactor.

The protein resides in the cell membrane. It carries out the reaction a ribonucleoside 5'-phosphate + H2O = a ribonucleoside + phosphate. In terms of biological role, hydrolyzes extracellular nucleotides into membrane permeable nucleosides. The chain is 5'-nucleotidase from Diplobatis ommata (Ocellated electric ray).